Consider the following 390-residue polypeptide: S-adenosylmethionine synthase 2 (390 aa).

Residue Glu-9 coordinates Mg(2+). Residue His-15 coordinates ATP. A K(+)-binding site is contributed by Glu-43. The L-methionine site is built by Glu-56 and Gln-99. Residues 167–169 (DGK), 235–238 (SGRF), Asp-246, 252–253 (RK), Ala-269, Lys-273, and Lys-277 contribute to the ATP site. Asp-246 contacts L-methionine. Lys-277 serves as a coordination point for L-methionine.

Belongs to the AdoMet synthase family. Homotetramer. Mn(2+) is required as a cofactor. Mg(2+) serves as cofactor. The cofactor is Co(2+). Requires K(+) as cofactor.

Its subcellular location is the cytoplasm. It carries out the reaction L-methionine + ATP + H2O = S-adenosyl-L-methionine + phosphate + diphosphate. It functions in the pathway amino-acid biosynthesis; S-adenosyl-L-methionine biosynthesis; S-adenosyl-L-methionine from L-methionine: step 1/1. Catalyzes the formation of S-adenosylmethionine from methionine and ATP. The reaction comprises two steps that are both catalyzed by the same enzyme: formation of S-adenosylmethionine (AdoMet) and triphosphate, and subsequent hydrolysis of the triphosphate. The protein is S-adenosylmethionine synthase 2 (SAM2) of Actinidia chinensis var. chinensis (Chinese soft-hair kiwi).